A 248-amino-acid polypeptide reads, in one-letter code: Probable transcriptional regulator LumQ (248 aa).

In terms of domain architecture, HTH araC/xylS-type spans 148 to 246 (VLIDNYIEQH…GMSPTRYQFF (99 aa)). DNA-binding regions (H-T-H motif) lie at residues 165–186 (AELS…KSQM) and 213–236 (LSQV…RRLY).

Its function is as follows. Probable transcriptional regulator. Its target gene(s) is not yet known. In Photobacterium leiognathi, this protein is Probable transcriptional regulator LumQ (lumQ).